Here is a 326-residue protein sequence, read N- to C-terminus: Protein BugT (326 aa).

An N-terminal signal peptide occupies residues 1–25 (MNMTRLLAVIGIFIATAGIAAPVSA).

This sequence belongs to the UPF0065 (bug) family.

The protein localises to the periplasm. The polypeptide is Protein BugT (bugT) (Bordetella pertussis (strain Tohama I / ATCC BAA-589 / NCTC 13251)).